A 466-amino-acid chain; its full sequence is 3-isopropylmalate dehydratase large subunit (466 aa).

Positions 347, 407, and 410 each coordinate [4Fe-4S] cluster.

The protein belongs to the aconitase/IPM isomerase family. LeuC type 1 subfamily. Heterodimer of LeuC and LeuD. It depends on [4Fe-4S] cluster as a cofactor.

It catalyses the reaction (2R,3S)-3-isopropylmalate = (2S)-2-isopropylmalate. It participates in amino-acid biosynthesis; L-leucine biosynthesis; L-leucine from 3-methyl-2-oxobutanoate: step 2/4. Its function is as follows. Catalyzes the isomerization between 2-isopropylmalate and 3-isopropylmalate, via the formation of 2-isopropylmaleate. This chain is 3-isopropylmalate dehydratase large subunit, found in Solibacter usitatus (strain Ellin6076).